A 737-amino-acid polypeptide reads, in one-letter code: Polyribonucleotide nucleotidyltransferase (737 aa).

Residues Asp489 and Asp495 each contribute to the Mg(2+) site. One can recognise a KH domain in the interval 556–615 (PKIDTIKIDVDKIKIVIGKGGETIDKIIAETGVKIDIDEEGNVSIYSSDQDAINRAKEII). One can recognise an S1 motif domain in the interval 625–693 (DEVYRAKVVR…EKGRIDASMK (69 aa)). Positions 691–737 (SMKALLPRPPKPEHDEKGEKSERPHRPRHHKDHKPKKEFTETPKDSE) are disordered. The span at 700 to 714 (PKPEHDEKGEKSERP) shows a compositional bias: basic and acidic residues. Over residues 715 to 724 (HRPRHHKDHK) the composition is skewed to basic residues. Over residues 725 to 737 (PKKEFTETPKDSE) the composition is skewed to basic and acidic residues.

The protein belongs to the polyribonucleotide nucleotidyltransferase family. It depends on Mg(2+) as a cofactor.

It is found in the cytoplasm. The enzyme catalyses RNA(n+1) + phosphate = RNA(n) + a ribonucleoside 5'-diphosphate. Its function is as follows. Involved in mRNA degradation. Catalyzes the phosphorolysis of single-stranded polyribonucleotides processively in the 3'- to 5'-direction. This is Polyribonucleotide nucleotidyltransferase from Streptococcus pneumoniae (strain ATCC 700669 / Spain 23F-1).